Consider the following 287-residue polypeptide: ATP synthase gamma chain (287 aa).

The protein belongs to the ATPase gamma chain family. F-type ATPases have 2 components, CF(1) - the catalytic core - and CF(0) - the membrane proton channel. CF(1) has five subunits: alpha(3), beta(3), gamma(1), delta(1), epsilon(1). CF(0) has three main subunits: a, b and c.

It is found in the cell inner membrane. Produces ATP from ADP in the presence of a proton gradient across the membrane. The gamma chain is believed to be important in regulating ATPase activity and the flow of protons through the CF(0) complex. The chain is ATP synthase gamma chain from Tolumonas auensis (strain DSM 9187 / NBRC 110442 / TA 4).